The primary structure comprises 206 residues: Methylthioribulose-1-phosphate dehydratase (206 aa).

Zn(2+)-binding residues include His-96 and His-98.

This sequence belongs to the aldolase class II family. MtnB subfamily. Requires Zn(2+) as cofactor.

It carries out the reaction 5-(methylsulfanyl)-D-ribulose 1-phosphate = 5-methylsulfanyl-2,3-dioxopentyl phosphate + H2O. The protein operates within amino-acid biosynthesis; L-methionine biosynthesis via salvage pathway; L-methionine from S-methyl-5-thio-alpha-D-ribose 1-phosphate: step 2/6. Catalyzes the dehydration of methylthioribulose-1-phosphate (MTRu-1-P) into 2,3-diketo-5-methylthiopentyl-1-phosphate (DK-MTP-1-P). The sequence is that of Methylthioribulose-1-phosphate dehydratase from Exiguobacterium sibiricum (strain DSM 17290 / CCUG 55495 / CIP 109462 / JCM 13490 / 255-15).